Reading from the N-terminus, the 201-residue chain is uncharacterized protein (201 aa).

Positions 1 to 28 (MMTFKNLRYGLSSSVVLAASLFSVLSYA) are cleaved as a signal peptide.

It belongs to the fimbrial protein family.

It localises to the fimbrium. In terms of biological role, part of the yadCKLM-htrE-yadVN fimbrial operon. Could contribute to adhesion to various surfaces in specific environmental niches. This is an uncharacterized protein from Escherichia coli (strain K12).